Reading from the N-terminus, the 151-residue chain is Deoxyuridine 5'-triphosphate nucleotidohydrolase (151 aa).

Substrate is bound by residues 70 to 72 (RSG), N83, 87 to 89 (LID), and M97.

It belongs to the dUTPase family. Mg(2+) serves as cofactor.

It carries out the reaction dUTP + H2O = dUMP + diphosphate + H(+). Its pathway is pyrimidine metabolism; dUMP biosynthesis; dUMP from dCTP (dUTP route): step 2/2. This enzyme is involved in nucleotide metabolism: it produces dUMP, the immediate precursor of thymidine nucleotides and it decreases the intracellular concentration of dUTP so that uracil cannot be incorporated into DNA. This chain is Deoxyuridine 5'-triphosphate nucleotidohydrolase, found in Shigella flexneri serotype 5b (strain 8401).